We begin with the raw amino-acid sequence, 514 residues long: 2,3-bisphosphoglycerate-independent phosphoglycerate mutase (514 aa).

Residues Asp-14 and Ser-64 each coordinate Mn(2+). Ser-64 functions as the Phosphoserine intermediate in the catalytic mechanism. Residues His-125, 155 to 156 (RD), Arg-187, Arg-193, 263 to 266 (RADR), and Lys-336 each bind substrate. Mn(2+)-binding residues include Asp-403, His-407, Asp-444, His-445, and His-463.

The protein belongs to the BPG-independent phosphoglycerate mutase family. As to quaternary structure, monomer. Mn(2+) is required as a cofactor.

The catalysed reaction is (2R)-2-phosphoglycerate = (2R)-3-phosphoglycerate. The protein operates within carbohydrate degradation; glycolysis; pyruvate from D-glyceraldehyde 3-phosphate: step 3/5. Functionally, catalyzes the interconversion of 2-phosphoglycerate and 3-phosphoglycerate. In Shewanella oneidensis (strain ATCC 700550 / JCM 31522 / CIP 106686 / LMG 19005 / NCIMB 14063 / MR-1), this protein is 2,3-bisphosphoglycerate-independent phosphoglycerate mutase.